The primary structure comprises 1528 residues: Multidrug resistance-associated protein 1 (1528 aa).

The Extracellular segment spans residues 1 to 33 (MALRSFCSADGSDPLWDWNVTWHTSNPDFTKCF). Asparagine 19 carries an N-linked (GlcNAc...) asparagine glycan. A helical membrane pass occupies residues 34-54 (QNTVLTWVPCFYLWSCFPLYF). Residues 55-74 (FYLSRHDRGYIQMTHLNKTK) lie on the Cytoplasmic side of the membrane. The chain crosses the membrane as a helical span at residues 75–95 (TALGFFLWIICWADLFYSFWE). Residues 96-100 (RSQGV) are Extracellular-facing. A helical transmembrane segment spans residues 101–121 (LRAPVLLVSPTLLGITMLLAT). Residues 122–133 (FLIQLERRKGVQ) are Cytoplasmic-facing. The chain crosses the membrane as a helical span at residues 134–154 (SSGIMLTFWLVALLCALAILR). Topologically, residues 155-172 (SKIISALKKDAHVDVFRD) are extracellular. A helical transmembrane segment spans residues 173 to 193 (STFYLYFTLVLVQLVLSCFSD). Residues 194 to 317 (CSPLFSETVH…KDREPSLFKV (124 aa)) lie on the Cytoplasmic side of the membrane. Tyrosine 277 carries the phosphotyrosine modification. At serine 290 the chain carries Phosphoserine. Residues 318 to 338 (LYKTFGPYFLMSFLYKALHDL) traverse the membrane as a helical segment. The 284-residue stretch at 326-609 (FLMSFLYKAL…LPMVISSIVQ (284 aa)) folds into the ABC transmembrane type-1 1 domain. Over 339 to 364 (MMFAGPKILELIINFVNDREAPDWQG) the chain is Extracellular. A helical transmembrane segment spans residues 365–385 (YFYTALLFVSACLQTLALHQY). Residues 386–441 (FHICFVSGMRIKTAVVGAVYRKALLITNAARKSSTVGEIVNLMSVDAQRFMDLATY) lie on the Cytoplasmic side of the membrane. A helical transmembrane segment spans residues 442–462 (INMIWSAPLQVILALYFLWLS). The Extracellular segment spans residues 463 to 465 (LGP). A helical transmembrane segment spans residues 466–486 (SVLAGVAVMILMVPLNAVMAM). Over 487-548 (KTKTYQVAHM…VLKKSAYLAA (62 aa)) the chain is Cytoplasmic. Position 504 is an N6-succinyllysine (lysine 504). The helical transmembrane segment at 549 to 569 (VGTFTWVCTPFLVALSTFAVF) threads the bilayer. At 570–591 (VTVDERNILDAKKAFVSLALFN) the chain is on the extracellular side. A helical transmembrane segment spans residues 592-612 (ILRFPLNILPMVISSIVQASV). The Cytoplasmic portion of the chain corresponds to 613 to 963 (SLKRLRIFLS…VQLSVYWNYM (351 aa)). Residues 644 to 868 (ITVKNATFTW…DGAFAEFLRT (225 aa)) form the ABC transporter 1 domain. Position 678–685 (678–685 (GQVGCGKS)) interacts with ATP. Disordered regions lie at residues 876 to 895 (LASE…PVEN) and 909 to 929 (RHLS…SSIA). 4 positions are modified to phosphoserine: serine 878, serine 882, serine 912, and serine 927. The segment covering 910-929 (HLSNSSSHSGDTSQQHSSIA) has biased composition (polar residues). A helical membrane pass occupies residues 964–984 (KAIGLFITFLSIFLFLCNHVS). The region spanning 971–1253 (TFLSIFLFLC…LVRMSSEMET (283 aa)) is the ABC transmembrane type-1 2 domain. Residues 985 to 1022 (ALASNYWLSLWTDDPPVVNGTQANRNFRLSVYGALGIL) lie on the Extracellular side of the membrane. A glycan (N-linked (GlcNAc...) asparagine) is linked at asparagine 1003. The chain crosses the membrane as a helical span at residues 1023-1043 (QGAAIFGYSMAVSIGGIFASR). Over 1044-1086 (RLHLDLLYNVLRSPMSFFERTPSGNLVNRFSKELDTVDSMIPQ) the chain is Cytoplasmic. A helical transmembrane segment spans residues 1087–1107 (VIKMFMGSLFSVIGAVIIILL). Position 1108 (alanine 1108) is a topological domain, extracellular. A helical transmembrane segment spans residues 1109 to 1129 (TPIAAVIIPPLGLVYFFVQRF). Residues 1130–1200 (YVASSRQLKR…VANRWLAVRL (71 aa)) lie on the Cytoplasmic side of the membrane. Residues 1201–1221 (ECVGNCIVLFAALFAVISRHS) form a helical membrane-spanning segment. Over 1222–1223 (LS) the chain is Extracellular. A helical membrane pass occupies residues 1224 to 1244 (AGLVGLSVSYSLQITAYLNWL). Over 1245–1528 (VRMSSEMETN…YSMAKDAGLV (284 aa)) the chain is Cytoplasmic. The ABC transporter 2 domain maps to 1290-1524 (VEFRDYCLRY…RGIFYSMAKD (235 aa)). 1324-1331 (GRTGAGKS) contributes to the ATP binding site.

Belongs to the ABC transporter superfamily. ABCC family. Conjugate transporter (TC 3.A.1.208) subfamily.

The protein localises to the cell membrane. The protein resides in the basolateral cell membrane. The catalysed reaction is ATP + H2O + xenobioticSide 1 = ADP + phosphate + xenobioticSide 2.. It catalyses the reaction an S-substituted glutathione(in) + ATP + H2O = an S-substituted glutathione(out) + ADP + phosphate + H(+). The enzyme catalyses leukotriene C4(in) + ATP + H2O = leukotriene C4(out) + ADP + phosphate + H(+). It carries out the reaction sphing-4-enine 1-phosphate(in) + ATP + H2O = sphing-4-enine 1-phosphate(out) + ADP + phosphate + H(+). The catalysed reaction is 17beta-estradiol 17-O-(beta-D-glucuronate)(in) + ATP + H2O = 17beta-estradiol 17-O-(beta-D-glucuronate)(out) + ADP + phosphate + H(+). It catalyses the reaction vincristine(in) + ATP + H2O = vincristine(out) + ADP + phosphate + H(+). The enzyme catalyses daunorubicin(in) + ATP + H2O = daunorubicin(out) + ADP + phosphate + H(+). It carries out the reaction 2',3'-cGAMP(in) + ATP + H2O = 2',3'-cGAMP(out) + ADP + phosphate + H(+). The catalysed reaction is S-[(2E,6E,10E)-geranylgeranyl]-L-glutathione(in) + ATP + H2O = S-[(2E,6E,10E)-geranylgeranyl]-L-glutathione(out) + ADP + phosphate + H(+). It catalyses the reaction prostaglandin A2-S-(R)-glutathione(in) + ATP + H2O = prostaglandin A2-S-(R)-glutathione(out) + ADP + phosphate + H(+). The enzyme catalyses prostaglandin A2-S-(S)-glutathione(in) + ATP + H2O = prostaglandin A2-S-(S)-glutathione(out) + ADP + phosphate + H(+). Its activity is regulated as follows. MK 571 inhibits sphingosine 1-phosphate and leukotriene C4 export. Functionally, mediates export of organic anions and drugs from the cytoplasm. Mediates ATP-dependent transport of glutathione and glutathione conjugates, leukotriene C4, estradiol-17-beta-o-glucuronide, methotrexate, antiviral drugs and other xenobiotics. Confers resistance to anticancer drugs by decreasing accumulation of drugs in cells, and by mediating ATP- and GSH-dependent drug export. Hydrolyzes ATP with low efficiency. Catalyzes the export of sphingosine 1-phosphate from mast cells independently of their degranulation. Participates in inflammatory response by allowing export of leukotriene C4 from leukotriene C4-synthesizing cells. Mediates ATP-dependent, GSH-independent cyclic GMP-AMP (cGAMP) export. Thus, by limiting intracellular cGAMP concentrations negatively regulates the cGAS-STING pathway. Exports S-geranylgeranyl-glutathione (GGG) in lymphoid cells and stromal compartments of lymphoid organs. ABCC1 (via extracellular transport) with GGT5 (via GGG catabolism) establish GGG gradients within lymphoid tissues to position P2RY8-positive lymphocytes at germinal centers in lymphoid follicles and restrict their chemotactic transmigration from blood vessels to the bone marrow parenchyma. Mediates basolateral export of GSH-conjugated R- and S-prostaglandin A2 diastereomers in polarized epithelial cells. The protein is Multidrug resistance-associated protein 1 of Mus musculus (Mouse).